Reading from the N-terminus, the 331-residue chain is MNLDQKGLKKRSITVAYFFNTIGKKNDIKFRRLNEVDEQKRRIFERDLHRPGLALAGFTNLFTYKRVQILGNTETRFLNHLEEEERNRVFANLVRFKMPCIILTSNNKLPQNLLDMATNADIPVYVTRCSSTKTIYIVTGFLDDQFSLYQQYHGSMVDVYGVGVLLTGKSGLGKSEIALDLVERGHGLVADDVVVIHRKGESMVLNAKRNNIIDHFMEIRGLGVVDVRANFGIRAIRDVKEVQVVVELLEWNKEIVYERLGLDIKSRKILGVDVPLVELPIFPGKNITVIIEVVALNFLLKRYSNYVAAEALTDRINDVINREKGEEDSYE.

Catalysis depends on residues H153 and K174. 168-175 is an ATP binding site; that stretch reads GKSGLGKS. S175 contacts Mg(2+). D192 (proton acceptor; for phosphorylation activity. Proton donor; for dephosphorylation activity) is an active-site residue. The segment at 217–226 is important for the catalytic mechanism of both phosphorylation and dephosphorylation; it reads MEIRGLGVVD. Mg(2+) is bound at residue E218. The active site involves R259. Positions 280 to 285 are important for the catalytic mechanism of dephosphorylation; sequence PIFPGK.

This sequence belongs to the HPrK/P family. Homohexamer. It depends on Mg(2+) as a cofactor.

The catalysed reaction is [HPr protein]-L-serine + ATP = [HPr protein]-O-phospho-L-serine + ADP + H(+). It carries out the reaction [HPr protein]-O-phospho-L-serine + phosphate + H(+) = [HPr protein]-L-serine + diphosphate. In terms of biological role, catalyzes the ATP- as well as the pyrophosphate-dependent phosphorylation of a specific serine residue in HPr, a phosphocarrier protein of the phosphoenolpyruvate-dependent sugar phosphotransferase system (PTS). HprK/P also catalyzes the pyrophosphate-producing, inorganic phosphate-dependent dephosphorylation (phosphorolysis) of seryl-phosphorylated HPr (P-Ser-HPr). The protein is HPr kinase/phosphorylase of Pelodictyon phaeoclathratiforme (strain DSM 5477 / BU-1).